The sequence spans 297 residues: UTP--glucose-1-phosphate uridylyltransferase (297 aa).

It belongs to the UDPGP type 2 family.

It carries out the reaction alpha-D-glucose 1-phosphate + UTP + H(+) = UDP-alpha-D-glucose + diphosphate. It participates in carbohydrate metabolism; nucleotide-sugar metabolism. Its pathway is bacterial outer membrane biogenesis; lipopolysaccharide biosynthesis. May play a role in stationary phase survival. The polypeptide is UTP--glucose-1-phosphate uridylyltransferase (galF) (Salmonella typhimurium (strain LT2 / SGSC1412 / ATCC 700720)).